The primary structure comprises 461 residues: Cysteine--tRNA ligase (461 aa).

Residue C27 coordinates Zn(2+). A 'HIGH' region motif is present at residues 29–39; it reads ITVYDYCHIGH. Zn(2+) is bound by residues C208, H233, and E237. Positions 265–269 match the 'KMSKS' region motif; that stretch reads KMSKS. Residue K268 participates in ATP binding.

Belongs to the class-I aminoacyl-tRNA synthetase family. As to quaternary structure, monomer. Requires Zn(2+) as cofactor.

The protein localises to the cytoplasm. The catalysed reaction is tRNA(Cys) + L-cysteine + ATP = L-cysteinyl-tRNA(Cys) + AMP + diphosphate. The sequence is that of Cysteine--tRNA ligase from Chromohalobacter salexigens (strain ATCC BAA-138 / DSM 3043 / CIP 106854 / NCIMB 13768 / 1H11).